Here is a 206-residue protein sequence, read N- to C-terminus: Ion-translocating oxidoreductase complex subunit G (206 aa).

The helical transmembrane segment at Gly9–Met29 threads the bilayer. Thr174 carries the post-translational modification FMN phosphoryl threonine.

Belongs to the RnfG family. In terms of assembly, the complex is composed of six subunits: RsxA, RsxB, RsxC, RsxD, RsxE and RsxG. FMN serves as cofactor.

The protein resides in the cell inner membrane. Its function is as follows. Part of a membrane-bound complex that couples electron transfer with translocation of ions across the membrane. Required to maintain the reduced state of SoxR. This chain is Ion-translocating oxidoreductase complex subunit G, found in Salmonella typhimurium (strain LT2 / SGSC1412 / ATCC 700720).